A 208-amino-acid chain; its full sequence is 3-demethoxyubiquinol 3-hydroxylase (208 aa).

Residues E57, E87, H90, E139, E171, and H174 each contribute to the Fe cation site.

This sequence belongs to the COQ7 family. Fe cation is required as a cofactor.

Its subcellular location is the cell membrane. The enzyme catalyses a 5-methoxy-2-methyl-3-(all-trans-polyprenyl)benzene-1,4-diol + AH2 + O2 = a 3-demethylubiquinol + A + H2O. The protein operates within cofactor biosynthesis; ubiquinone biosynthesis. Catalyzes the hydroxylation of 2-nonaprenyl-3-methyl-6-methoxy-1,4-benzoquinol during ubiquinone biosynthesis. This Burkholderia pseudomallei (strain 1106a) protein is 3-demethoxyubiquinol 3-hydroxylase.